We begin with the raw amino-acid sequence, 333 residues long: Ephrin-B2 (333 aa).

An N-terminal signal peptide occupies residues 1–27 (MAVRRDSVWKYCWGVLMVLCRTAISKS). The 137-residue stretch at 28–164 (IVLEPIYWNS…TRAMKILMKV (137 aa)) folds into the Ephrin RBD domain. Residues 28-229 (IVLEPIYWNS…ILGSEVALFA (202 aa)) are Extracellular-facing. Residue Asn36 is glycosylated (N-linked (GlcNAc...) asparagine). Disulfide bonds link Cys62–Cys101 and Cys89–Cys153. A glycan (N-linked (GlcNAc...) asparagine) is linked at Asn139. Residues 165–213 (GQDASSAGSTRNKDPTRRPELEAGTNGRSSTTSPFVKPNPGSSTDGNSA) are disordered. Positions 175–185 (RNKDPTRRPEL) are enriched in basic and acidic residues. A compositionally biased stretch (polar residues) spans 190-213 (NGRSSTTSPFVKPNPGSSTDGNSA). The helical transmembrane segment at 230–250 (GIASGCIIFIVIIITLVVLLL) threads the bilayer. Residues 251-333 (KYRRRHRKHS…QSPANIYYKV (83 aa)) lie on the Cytoplasmic side of the membrane. Ser260 carries the phosphoserine modification. Phosphothreonine is present on Thr274. At Arg277 the chain carries Omega-N-methylarginine. The PDZ-binding motif lies at 331–333 (YKV).

The protein belongs to the ephrin family. Interacts with PDZRN3. Binds to the receptor tyrosine kinases EPHA4, EPHB4 and EPHA3. In terms of assembly, (Microbial infection) Interacts with Hendra virus and Nipah virus G protein. Post-translationally, inducible phosphorylation of tyrosine residues in the cytoplasmic domain. As to expression, lung and kidney.

The protein localises to the cell membrane. Its subcellular location is the cell junction. The protein resides in the adherens junction. In terms of biological role, cell surface transmembrane ligand for Eph receptors, a family of receptor tyrosine kinases which are crucial for migration, repulsion and adhesion during neuronal, vascular and epithelial development. Binds promiscuously Eph receptors residing on adjacent cells, leading to contact-dependent bidirectional signaling into neighboring cells. The signaling pathway downstream of the receptor is referred to as forward signaling while the signaling pathway downstream of the ephrin ligand is referred to as reverse signaling. Binds to receptor tyrosine kinase including EPHA4, EPHA3 and EPHB4. Together with EPHB4 plays a central role in heart morphogenesis and angiogenesis through regulation of cell adhesion and cell migration. EPHB4-mediated forward signaling controls cellular repulsion and segregation from EFNB2-expressing cells. May play a role in constraining the orientation of longitudinally projecting axons. Functionally, (Microbial infection) Acts as a receptor for Hendra virus and Nipah virus. This Homo sapiens (Human) protein is Ephrin-B2 (EFNB2).